We begin with the raw amino-acid sequence, 306 residues long: Pantothenate kinase (306 aa).

91-98 lines the ATP pocket; that stretch reads GSVAVGKS.

This sequence belongs to the prokaryotic pantothenate kinase family.

It localises to the cytoplasm. The catalysed reaction is (R)-pantothenate + ATP = (R)-4'-phosphopantothenate + ADP + H(+). It participates in cofactor biosynthesis; coenzyme A biosynthesis; CoA from (R)-pantothenate: step 1/5. The sequence is that of Pantothenate kinase from Streptococcus equi subsp. equi (strain 4047).